We begin with the raw amino-acid sequence, 62 residues long: Small ribosomal subunit protein eS27 (62 aa).

Cysteine 17, cysteine 20, cysteine 36, and cysteine 39 together coordinate Zn(2+). The C4-type zinc-finger motif lies at cysteine 17 to cysteine 39.

Belongs to the eukaryotic ribosomal protein eS27 family. Part of the 30S ribosomal subunit. The cofactor is Zn(2+).

In Methanoculleus marisnigri (strain ATCC 35101 / DSM 1498 / JR1), this protein is Small ribosomal subunit protein eS27.